The chain runs to 196 residues: Pro-FMRFamide-related neuropeptide VF (196 aa).

Positions 1–21 (MEIISLKRFILLMLATSSLLT) are cleaved as a signal peptide. A propeptide spanning residues 22–57 (SNIFCTDESRIPSLYSKKNYDKYSEPRGDLGWEKER) is cleaved from the precursor. Residue F92 is modified to Phenylalanine amide. 2 consecutive propeptides follow at residues 95 to 99 (NMEEE) and 115 to 121 (NREDSLS). Phenylalanine amide is present on F131. A propeptide spanning residues 134-196 (TIAAKSITKT…IDDAELKQEK (63 aa)) is cleaved from the precursor.

Belongs to the FARP (FMRFamide related peptide) family. In terms of tissue distribution, expressed in hypothalamus, where it is localized to the dorsomedial hypothalamic nucleus (DMH), paraventricular nucleus (PVN), and to neuronal projections from the PVN to the neurosecretory zone of the median eminence.

The protein localises to the secreted. Functionally, may act in concert with kisspeptin, through opposing affects, to regulate the activity of gonadotropin-releasing hormone (GnRH) neurons across the seasons, leading to an annual change in fertility and the cyclical seasonal transition from non-breeding to breeding season. In terms of biological role, efficiently inhibits forskolin-induced production of cAMP. Acts as a potent negative regulator of gonadotropin synthesis and secretion. Induces secretion of prolactin. Its function is as follows. Efficiently inhibits forskolin-induced production of cAMP. Blocks morphine-induced analgesia. Shows no inhibitory activity of forskolin-induced production of cAMP. In Ovis aries (Sheep), this protein is Pro-FMRFamide-related neuropeptide VF.